Reading from the N-terminus, the 216-residue chain is Urease accessory protein UreG (216 aa).

Residue Gly25–Thr32 participates in GTP binding.

This sequence belongs to the SIMIBI class G3E GTPase family. UreG subfamily. In terms of assembly, homodimer. UreD, UreF and UreG form a complex that acts as a GTP-hydrolysis-dependent molecular chaperone, activating the urease apoprotein by helping to assemble the nickel containing metallocenter of UreC. The UreE protein probably delivers the nickel.

Its subcellular location is the cytoplasm. Its function is as follows. Facilitates the functional incorporation of the urease nickel metallocenter. This process requires GTP hydrolysis, probably effectuated by UreG. This chain is Urease accessory protein UreG, found in Burkholderia mallei (strain NCTC 10247).